A 176-amino-acid chain; its full sequence is MDTERIGVGKIIGTHGIRGEVKVFPLTDFPERFRPGTRLILEQEGADGREGRTFPVTVISVRPGKGNLILKLAEINDADQAGAVRGATLKVEPWEVEPLPEGHYYIYQLLGSRVYTTGGEFLGILRDILATGANDVYVVRNEDAGEILIPALKTVVRQVDLARKEIRVELPPGLRD.

One can recognise a PRC barrel domain in the interval Glu101 to Leu174.

Belongs to the RimM family. In terms of assembly, binds ribosomal protein uS19.

The protein localises to the cytoplasm. In terms of biological role, an accessory protein needed during the final step in the assembly of 30S ribosomal subunit, possibly for assembly of the head region. Essential for efficient processing of 16S rRNA. May be needed both before and after RbfA during the maturation of 16S rRNA. It has affinity for free ribosomal 30S subunits but not for 70S ribosomes. This Moorella thermoacetica (strain ATCC 39073 / JCM 9320) protein is Ribosome maturation factor RimM.